Consider the following 422-residue polypeptide: uncharacterized protein (422 aa).

One can recognise an RRM domain in the interval 5 to 83 (CVVYVGNIPY…RRLRVDFPTA (79 aa)). The interval 337–358 (RSSSIPSSGSIRSPSLTTTSAQ) is disordered.

The protein localises to the nucleus. This is an uncharacterized protein from Schizosaccharomyces pombe (strain 972 / ATCC 24843) (Fission yeast).